The chain runs to 366 residues: Lipase member J (366 aa).

Ser-141 serves as the catalytic Nucleophile. Residues Asp-312 and His-341 each act as charge relay system in the active site.

This sequence belongs to the AB hydrolase superfamily. Lipase family.

The polypeptide is Lipase member J (LIPJ) (Homo sapiens (Human)).